Reading from the N-terminus, the 154-residue chain is SsrA-binding protein (154 aa).

Residues 123 to 142 show a composition bias toward basic and acidic residues; the sequence is AEHDKRHTIKDRDWQREQGR. A disordered region spans residues 123–154; that stretch reads AEHDKRHTIKDRDWQREQGRLMRHKVSAPHKD. The segment covering 143-154 has biased composition (basic residues); sequence LMRHKVSAPHKD.

It belongs to the SmpB family.

It localises to the cytoplasm. Its function is as follows. Required for rescue of stalled ribosomes mediated by trans-translation. Binds to transfer-messenger RNA (tmRNA), required for stable association of tmRNA with ribosomes. tmRNA and SmpB together mimic tRNA shape, replacing the anticodon stem-loop with SmpB. tmRNA is encoded by the ssrA gene; the 2 termini fold to resemble tRNA(Ala) and it encodes a 'tag peptide', a short internal open reading frame. During trans-translation Ala-aminoacylated tmRNA acts like a tRNA, entering the A-site of stalled ribosomes, displacing the stalled mRNA. The ribosome then switches to translate the ORF on the tmRNA; the nascent peptide is terminated with the 'tag peptide' encoded by the tmRNA and targeted for degradation. The ribosome is freed to recommence translation, which seems to be the essential function of trans-translation. The protein is SsrA-binding protein of Leptothrix cholodnii (strain ATCC 51168 / LMG 8142 / SP-6) (Leptothrix discophora (strain SP-6)).